A 771-amino-acid polypeptide reads, in one-letter code: Dol-P-Glc:Glc(2)Man(9)GlcNAc(2)-PP-Dol alpha-1,2-glucosyltransferase (771 aa).

7 helical membrane-spanning segments follow: residues 45–65 (FITASGFILIYFFARSWLALV), 160–180 (VSFYAYHTAINIALFPVIFFF), 182–202 (GLYYTDVASTLVMLVAYWNHL), 221–241 (VVLGVAALFMRQTNVFWVVVY), 293–313 (VDMAWPDDWALCLLSIGIAAL), 326–346 (HITIMGLFAGFVAWNGGVVLG), and 357–377 (LPQMLYIWPFFAFFSAPLLIP). The disordered stretch occupies residues 392 to 449 (TPTPSHTTTKDPGRSSWRFTKPSITSKKSSTTKPPQRSGPTPASSSSSSSSFSPDTNS). Composition is skewed to low complexity over residues 411 to 426 (TKPSITSKKSSTTKPP) and 435 to 449 (SSSSSSSSFSPDTNS). An N-linked (GlcNAc...) asparagine glycan is attached at Asn448. 2 helical membrane passes run 469–489 (PFYLLATILLSAAIIHYNTII) and 503–525 (YIFRYTILRSSLVRLALVAAYTL). Basic and acidic residues predominate over residues 584–593 (QKNIKDKQKE). The tract at residues 584 to 605 (QKNIKDKQKEVEEEEEEEEKED) is disordered. A compositionally biased stretch (acidic residues) spans 594–604 (VEEEEEEEEKE). A run of 2 helical transmembrane segments spans residues 631 to 651 (TSTVLLWLLTTTLSLVTAPLV) and 656 to 676 (FILPWVFYRLLVPAMPVSSSL). The disordered stretch occupies residues 682-708 (SSSFASSTTESGNGDGNDAATAARQQQ). The chain crosses the membrane as a helical span at residues 728 to 748 (LALETVWFLAINIGTMYMFLF).

It belongs to the ALG10 glucosyltransferase family.

Its subcellular location is the endoplasmic reticulum membrane. The catalysed reaction is an alpha-D-Glc-(1-&gt;3)-alpha-D-Glc-(1-&gt;3)-alpha-D-Man-(1-&gt;2)-alpha-D-Man-(1-&gt;2)-alpha-D-Man-(1-&gt;3)-[alpha-D-Man-(1-&gt;2)-alpha-D-Man-(1-&gt;3)-[alpha-D-Man-(1-&gt;2)-alpha-D-Man-(1-&gt;6)]-alpha-D-Man-(1-&gt;6)]-beta-D-Man-(1-&gt;4)-beta-D-GlcNAc-(1-&gt;4)-alpha-D-GlcNAc-diphospho-di-trans,poly-cis-dolichol + a di-trans,poly-cis-dolichyl beta-D-glucosyl phosphate = a alpha-D-Glc-(1-&gt;2)-alpha-D-Glc-(1-&gt;3)-alpha-D-Glc-(1-&gt;3)-alpha-D-Man-(1-&gt;2)-alpha-D-Man-(1-&gt;2)-alpha-D-Man-(1-&gt;3)-[alpha-D-Man-(1-&gt;2)-alpha-D-Man-(1-&gt;3)-[alpha-D-Man-(1-&gt;2)-alpha-D-Man-(1-&gt;6)]-alpha-D-Man-(1-&gt;6)]-beta-D-Man-(1-&gt;4)-beta-D-GlcNAc-(1-&gt;4)-alpha-D-GlcNAc-diphospho-di-trans,poly-cis-dolichol + a di-trans,poly-cis-dolichyl phosphate + H(+). The protein operates within protein modification; protein glycosylation. Its function is as follows. Dol-P-Glc:Glc(2)Man(9)GlcNAc(2)-PP-Dol alpha-1,2-glucosyltransferase that operates in the biosynthetic pathway of dolichol-linked oligosaccharides, the glycan precursors employed in protein asparagine (N)-glycosylation. The assembly of dolichol-linked oligosaccharides begins on the cytosolic side of the endoplasmic reticulum membrane and finishes in its lumen. The sequential addition of sugars to dolichol pyrophosphate produces dolichol-linked oligosaccharides containing fourteen sugars, including two GlcNAcs, nine mannoses and three glucoses. Once assembled, the oligosaccharide is transferred from the lipid to nascent proteins by oligosaccharyltransferases. In the lumen of the endoplasmic reticulum, adds the third and last glucose residue from dolichyl phosphate glucose (Dol-P-Glc) onto the lipid-linked oligosaccharide intermediate Glc(2)Man(9)GlcNAc(2)-PP-Dol to produce Glc(3)Man(9)GlcNAc(2)-PP-Dol. This Neurospora crassa (strain ATCC 24698 / 74-OR23-1A / CBS 708.71 / DSM 1257 / FGSC 987) protein is Dol-P-Glc:Glc(2)Man(9)GlcNAc(2)-PP-Dol alpha-1,2-glucosyltransferase (alg-10).